A 121-amino-acid polypeptide reads, in one-letter code: Small ribosomal subunit protein uS13 (121 aa).

The tract at residues 89–121 (MRHRRGLPVRGQNTKNNARTRKGKKVSIAGKKK) is disordered. The span at 106–121 (ARTRKGKKVSIAGKKK) shows a compositional bias: basic residues.

The protein belongs to the universal ribosomal protein uS13 family. Part of the 30S ribosomal subunit. Forms a loose heterodimer with protein S19. Forms two bridges to the 50S subunit in the 70S ribosome.

Located at the top of the head of the 30S subunit, it contacts several helices of the 16S rRNA. In the 70S ribosome it contacts the 23S rRNA (bridge B1a) and protein L5 of the 50S subunit (bridge B1b), connecting the 2 subunits; these bridges are implicated in subunit movement. Contacts the tRNAs in the A and P-sites. The sequence is that of Small ribosomal subunit protein uS13 from Latilactobacillus sakei subsp. sakei (strain 23K) (Lactobacillus sakei subsp. sakei).